The following is a 432-amino-acid chain: Trigger factor (432 aa).

The PPIase FKBP-type domain maps to 161–246; it reads EDRVTIDFTG…LKKVEERELP (86 aa).

It belongs to the FKBP-type PPIase family. Tig subfamily.

It localises to the cytoplasm. It carries out the reaction [protein]-peptidylproline (omega=180) = [protein]-peptidylproline (omega=0). Its function is as follows. Involved in protein export. Acts as a chaperone by maintaining the newly synthesized protein in an open conformation. Functions as a peptidyl-prolyl cis-trans isomerase. In Cronobacter sakazakii (strain ATCC BAA-894) (Enterobacter sakazakii), this protein is Trigger factor.